A 372-amino-acid polypeptide reads, in one-letter code: F-box protein AFR (372 aa).

The segment covering 1–15 (MAEQETTSNINTIND) has biased composition (polar residues). The interval 1–27 (MAEQETTSNINTINDQAEEETRTKSQP) is disordered. Positions 29–74 (ISGLPNDIAELCLLRLPYPYHALYRSVSSSWNKTITNPRFLFSKQS) constitute an F-box domain. 5 Kelch repeats span residues 80 to 126 (PYLF…HALS), 135 to 178 (KLFV…NVNG), 179 to 227 (KIMA…VIGK), 229 to 276 (MCVT…IRDR), and 279 to 325 (VISE…DRVF).

Part of a SCF (ASK-cullin-F-box) protein ligase complex. Interacts with SKP1A.

The protein operates within protein modification; protein ubiquitination. Its function is as follows. Component of SCF (ASK-cullin-F-box) E3 ubiquitin ligase complexes, which may mediate the ubiquitination and subsequent proteasomal degradation of target proteins. Part of the phyA-mediated signaling transduction pathway leading to the regulation of gene expression and hypocotyls elongation in response to red and far-red light exposure. This is F-box protein AFR (AFR) from Arabidopsis thaliana (Mouse-ear cress).